A 279-amino-acid chain; its full sequence is Small ribosomal subunit protein uS2 (279 aa).

Acidic residues-rich tracts occupy residues 1-18 (MTENDNEVVEVVDDDEAV), 28-42 (TATEAEADTETDESN), and 65-81 (ADAEPDDELEGPTFDED). The disordered stretch occupies residues 1-81 (MTENDNEVVE…ELEGPTFDED (81 aa)).

The protein belongs to the universal ribosomal protein uS2 family.

The protein is Small ribosomal subunit protein uS2 of Haloquadratum walsbyi (strain DSM 16790 / HBSQ001).